We begin with the raw amino-acid sequence, 360 residues long: tRNA (guanine-N(7)-)-methyltransferase (360 aa).

The tract at residues 1–32 (MTPPPPKRQKRDEYRKATAEAASQPGPSDVAE) is disordered. Residues Gly-99 and 122–123 (EI) each bind S-adenosyl-L-methionine. The interval 177–196 (ADAASPVLSTDTEHTPTTLV) is disordered. A compositionally biased stretch (polar residues) spans 183–196 (VLSTDTEHTPTTLV). Residues 209-210 (NT) and Cys-229 contribute to the S-adenosyl-L-methionine site. Asp-232 is an active-site residue. 332 to 334 (TEE) provides a ligand contact to S-adenosyl-L-methionine.

This sequence belongs to the class I-like SAM-binding methyltransferase superfamily. TrmB family. In terms of assembly, forms a complex with trm82.

The protein resides in the nucleus. The enzyme catalyses guanosine(46) in tRNA + S-adenosyl-L-methionine = N(7)-methylguanosine(46) in tRNA + S-adenosyl-L-homocysteine. The protein operates within tRNA modification; N(7)-methylguanine-tRNA biosynthesis. Catalyzes the formation of N(7)-methylguanine at position 46 (m7G46) in tRNA. This is tRNA (guanine-N(7)-)-methyltransferase (trm8) from Neosartorya fischeri (strain ATCC 1020 / DSM 3700 / CBS 544.65 / FGSC A1164 / JCM 1740 / NRRL 181 / WB 181) (Aspergillus fischerianus).